A 100-amino-acid polypeptide reads, in one-letter code: Urease subunit gamma (100 aa).

It belongs to the urease gamma subunit family. In terms of assembly, heterotrimer of UreA (gamma), UreB (beta) and UreC (alpha) subunits. Three heterotrimers associate to form the active enzyme.

It localises to the cytoplasm. The enzyme catalyses urea + 2 H2O + H(+) = hydrogencarbonate + 2 NH4(+). It participates in nitrogen metabolism; urea degradation; CO(2) and NH(3) from urea (urease route): step 1/1. The polypeptide is Urease subunit gamma (Rhodopseudomonas palustris (strain ATCC BAA-98 / CGA009)).